The chain runs to 223 residues: MNKGEKLSLFKDYNLYCLTCEDYSLGRRNIDVVREILNAGVRIIQYREKKKTMREKYQEAKKIRELTAQYNALLIINDHLDLAKIVEADGVHIGQEDYPIEVAKEYLGDEFIIGLTTHTKTQVIEAFQKGADYIGLGPIFPSYTKEKPHPPIGLEIIEWAVNHVHIPIVAIGGIKESNIYEVLKHGAKCIAMVTEIVSSQDIYEKTKNIIRILEGYKNGKNLA.

4-amino-2-methyl-5-(diphosphooxymethyl)pyrimidine-binding positions include 45 to 49 (QYREK) and Asn77. Mg(2+) contacts are provided by Asp78 and Asp97. Thr116 is a binding site for 4-amino-2-methyl-5-(diphosphooxymethyl)pyrimidine. 142-144 (SYT) lines the 2-[(2R,5Z)-2-carboxy-4-methylthiazol-5(2H)-ylidene]ethyl phosphate pocket. A 4-amino-2-methyl-5-(diphosphooxymethyl)pyrimidine-binding site is contributed by Lys145. Residues Gly173 and 193 to 194 (VT) each bind 2-[(2R,5Z)-2-carboxy-4-methylthiazol-5(2H)-ylidene]ethyl phosphate.

Belongs to the thiamine-phosphate synthase family. Requires Mg(2+) as cofactor.

The catalysed reaction is 2-[(2R,5Z)-2-carboxy-4-methylthiazol-5(2H)-ylidene]ethyl phosphate + 4-amino-2-methyl-5-(diphosphooxymethyl)pyrimidine + 2 H(+) = thiamine phosphate + CO2 + diphosphate. The enzyme catalyses 2-(2-carboxy-4-methylthiazol-5-yl)ethyl phosphate + 4-amino-2-methyl-5-(diphosphooxymethyl)pyrimidine + 2 H(+) = thiamine phosphate + CO2 + diphosphate. It carries out the reaction 4-methyl-5-(2-phosphooxyethyl)-thiazole + 4-amino-2-methyl-5-(diphosphooxymethyl)pyrimidine + H(+) = thiamine phosphate + diphosphate. It functions in the pathway cofactor biosynthesis; thiamine diphosphate biosynthesis; thiamine phosphate from 4-amino-2-methyl-5-diphosphomethylpyrimidine and 4-methyl-5-(2-phosphoethyl)-thiazole: step 1/1. Condenses 4-methyl-5-(beta-hydroxyethyl)thiazole monophosphate (THZ-P) and 2-methyl-4-amino-5-hydroxymethyl pyrimidine pyrophosphate (HMP-PP) to form thiamine monophosphate (TMP). In Dictyoglomus thermophilum (strain ATCC 35947 / DSM 3960 / H-6-12), this protein is Thiamine-phosphate synthase.